The following is a 76-amino-acid chain: uncharacterized protein (76 aa).

Residues 12–32 (LPCGAFFISVLFFFNAVCIVS) form a helical membrane-spanning segment.

It localises to the cell membrane. This is an uncharacterized protein from Escherichia coli O157:H7.